The primary structure comprises 188 residues: ATP-dependent protease subunit HslV (188 aa).

The active site involves Thr-7. Na(+)-binding residues include Gly-162, Cys-165, and Ser-168.

Belongs to the peptidase T1B family. HslV subfamily. In terms of assembly, a double ring-shaped homohexamer of HslV is capped on each side by a ring-shaped HslU homohexamer. The assembly of the HslU/HslV complex is dependent on binding of ATP.

The protein localises to the cytoplasm. It catalyses the reaction ATP-dependent cleavage of peptide bonds with broad specificity.. Its activity is regulated as follows. Allosterically activated by HslU binding. Protease subunit of a proteasome-like degradation complex believed to be a general protein degrading machinery. The polypeptide is ATP-dependent protease subunit HslV (Thiobacillus denitrificans (strain ATCC 25259 / T1)).